The following is a 212-amino-acid chain: MQLFHLCLIISCSCPTVQASKLCLGWLWDMDIDPYKEFGASVELLSFLPSDFFPSVRDLLDTATALYRDALESPEHCTPHHTALRHVCLCWGDLMNLATWVGTNLEDQASRDLVVSYVNTNMGLKFRQLLWFHISCLTFGRDLVLEYLVSFGVWIRTPPAYRPSNAPILSTLPETTVVRQRGRTIRRRTPSPRRRRSQSPRRRRSQSRESQC.

Positions methionine 1–alanine 19 are cleaved as a signal peptide. Residues glycine 25–leucine 27 form an HBEAG region. A disordered region spans residues arginine 179–cysteine 212. A compositionally biased stretch (basic residues) spans glutamine 180 to serine 205. A 1; half-length repeat occupies threonine 184–proline 190. Residues threonine 184–glutamine 206 form a 3 X 8 AA repeats of S-P-R-R-R-R-S-Q region. The propeptide occupies threonine 184–cysteine 212. Tandem repeats lie at residues serine 191–glutamine 198 and serine 199–glutamine 206.

Belongs to the orthohepadnavirus precore antigen family. In terms of assembly, homodimerizes. Phosphorylated. Post-translationally, cleaved by host furin.

The protein resides in the secreted. It is found in the host nucleus. Functionally, may regulate immune response to the intracellular capsid in acting as a T-cell tolerogen, by having an immunoregulatory effect which prevents destruction of infected cells by cytotoxic T-cells. This immune regulation may predispose to chronicity during perinatal infections and prevent severe liver injury during adult infections. This chain is External core antigen, found in Hepatitis B virus genotype D subtype ayw (isolate Australia/AustKW/1991) (HBV-D).